Consider the following 865-residue polypeptide: Xylosyltransferase 2 (865 aa).

At 1 to 15 the chain is on the cytoplasmic side; sequence MVASARVQKLVRRYK. Residues 16 to 36 form a helical; Signal-anchor for type II membrane protein membrane-spanning segment; it reads LAIATALAILLLQGLVVWSFS. Topologically, residues 37–865 are lumenal; the sequence is GLEEDEAGEK…GPVKADGRLR (829 aa). The segment at 41–157 is disordered; it reads DEAGEKGRQR…EGAPQPTDNG (117 aa). The segment covering 53–65 has biased composition (basic and acidic residues); the sequence is RPLDPGEGSKDTD. A compositionally biased stretch (basic residues) spans 73–82; that stretch reads STGRRHGRWR. Residue asparagine 122 is glycosylated (N-linked (GlcNAc...) asparagine). Over residues 125–137 the composition is skewed to low complexity; sequence GAAAGEALVGAAG. 4 disulfides stabilise this stretch: cysteine 162–cysteine 190, cysteine 206–cysteine 448, cysteine 467–cysteine 480, and cysteine 469–cysteine 478. Residues valine 239, aspartate 267, and 296–298 contribute to the UDP-alpha-D-xylose site; that span reads TIW. An N-linked (GlcNAc...) asparagine glycan is attached at asparagine 327. Residue 400-401 coordinates UDP-alpha-D-xylose; that stretch reads DW. UDP-alpha-D-xylose contacts are provided by residues serine 481 and 504–505; that span reads RK. Cystine bridges form between cysteine 581–cysteine 833 and cysteine 826–cysteine 839. An N-linked (GlcNAc...) asparagine glycan is attached at asparagine 683. The tract at residues 846-865 is disordered; it reads SLSPDPKSELGPVKADGRLR.

The protein belongs to the glycosyltransferase 14 family. XylT subfamily. As to quaternary structure, monomer. Mg(2+) is required as a cofactor. Requires Mn(2+) as cofactor. In terms of processing, contains disulfide bonds.

Its subcellular location is the golgi apparatus membrane. It localises to the secreted. It carries out the reaction UDP-alpha-D-xylose + L-seryl-[protein] = 3-O-(beta-D-xylosyl)-L-seryl-[protein] + UDP + H(+). Its pathway is glycan metabolism; chondroitin sulfate biosynthesis. It functions in the pathway glycan metabolism; heparan sulfate biosynthesis. In terms of biological role, catalyzes the first step in the biosynthesis of chondroitin sulfate, heparan sulfate and dermatan sulfate proteoglycans, such as DCN. Transfers D-xylose from UDP-D-xylose to specific serine residues of the core protein. The polypeptide is Xylosyltransferase 2 (XYLT2) (Pan troglodytes (Chimpanzee)).